We begin with the raw amino-acid sequence, 318 residues long: CRISPR-associated endonuclease Cas1 1 (318 aa).

The Mn(2+) site is built by Glu-157, His-222, and Glu-237.

Belongs to the CRISPR-associated endonuclease Cas1 family. As to quaternary structure, homodimer, forms a heterotetramer with a Cas2 homodimer. Mg(2+) serves as cofactor. Mn(2+) is required as a cofactor.

CRISPR (clustered regularly interspaced short palindromic repeat), is an adaptive immune system that provides protection against mobile genetic elements (viruses, transposable elements and conjugative plasmids). CRISPR clusters contain spacers, sequences complementary to antecedent mobile elements, and target invading nucleic acids. CRISPR clusters are transcribed and processed into CRISPR RNA (crRNA). Acts as a dsDNA endonuclease. Involved in the integration of spacer DNA into the CRISPR cassette. The chain is CRISPR-associated endonuclease Cas1 1 from Francisella tularensis subsp. novicida (strain U112).